The primary structure comprises 252 residues: Probable S-methyl-5'-thioinosine phosphorylase (252 aa).

Phosphate is bound by residues threonine 8 and 44–45; that span reads RH. Residue methionine 173 participates in substrate binding. Residue threonine 174 participates in phosphate binding. 197–199 serves as a coordination point for substrate; the sequence is NYA.

Belongs to the PNP/MTAP phosphorylase family. MTAP subfamily. As to quaternary structure, homotrimer.

The catalysed reaction is S-methyl-5'-thioinosine + phosphate = 5-(methylsulfanyl)-alpha-D-ribose 1-phosphate + hypoxanthine. It functions in the pathway purine metabolism; purine nucleoside salvage. Catalyzes the reversible phosphorylation of S-methyl-5'-thioinosine (MTI) to hypoxanthine and 5-methylthioribose-1-phosphate. Involved in the breakdown of S-methyl-5'-thioadenosine (MTA), a major by-product of polyamine biosynthesis. Catabolism of (MTA) occurs via deamination to MTI and phosphorolysis to hypoxanthine. This chain is Probable S-methyl-5'-thioinosine phosphorylase, found in Methanocaldococcus jannaschii (strain ATCC 43067 / DSM 2661 / JAL-1 / JCM 10045 / NBRC 100440) (Methanococcus jannaschii).